The following is a 196-amino-acid chain: Small ribosomal subunit protein uS4c (196 aa).

The tract at residues 17–36 (ALPGLTRKTPKSGSNLKKKF) is disordered. The region spanning 89–150 (MRLDNILFRL…NQRSKRLIQN (62 aa)) is the S4 RNA-binding domain.

It belongs to the universal ribosomal protein uS4 family. As to quaternary structure, part of the 30S ribosomal subunit. Contacts protein S5. The interaction surface between S4 and S5 is involved in control of translational fidelity.

The protein resides in the plastid. The protein localises to the chloroplast. One of the primary rRNA binding proteins, it binds directly to 16S rRNA where it nucleates assembly of the body of the 30S subunit. In terms of biological role, with S5 and S12 plays an important role in translational accuracy. The sequence is that of Small ribosomal subunit protein uS4c (rps4) from Phyllostachys flexuosa (Drooping timber bamboo).